A 501-amino-acid polypeptide reads, in one-letter code: COP9 signalosome complex subunit 3 (501 aa).

The region spanning 275-445 (RFEDALFLLE…VFWTELSPVP (171 aa)) is the PCI domain.

The protein belongs to the CSN3 family. In terms of assembly, component of the CSN complex, probably composed of csn-1, csn-2, csn-3, csn-4, csn-5, csn-6 and csn-7. Within the complex it probably interacts directly with csn-2 and csn-4. May interact with itself.

The protein resides in the cytoplasm. It localises to the nucleus. Component of the COP9 signalosome complex (CSN), a complex involved in various cellular and developmental processes. The CSN complex is an essential regulator of the ubiquitin (Ubl) conjugation pathway by mediating the deneddylation of the cullin subunits of the SCF-type E3 ligase complexes, leading to decrease the Ubl ligase activity of SCF. The CSN complex plays an essential role in embryogenesis and oogenesis and is required to regulate microtubule stability in the early embryo. Mediates mei-3/katanin targeting for degradation at the meiosis to mitosis transition via deneddylation of cul-3. The chain is COP9 signalosome complex subunit 3 (csn-3) from Caenorhabditis elegans.